The sequence spans 20 residues: Hemocyanin subunit Ib (20 aa).

Residues 1 to 20 (DSVGSTTAHKQQNINHLLDK) form a disordered region.

Belongs to the tyrosinase family. Hemocyanin subfamily. As to quaternary structure, composed of 3 major subunits (IB, II and III) and 1 minor subunit (IA) which form homohexamers and heterohexamers. May also form larger structures. In terms of tissue distribution, hemolymph.

The protein localises to the secreted. It localises to the extracellular space. In terms of biological role, hemocyanins are copper-containing oxygen carriers occurring freely dissolved in the hemolymph of many mollusks and arthropods. This is Hemocyanin subunit Ib from Panulirus japonicus (Japanese spiny lobster).